The sequence spans 202 residues: GTP cyclohydrolase 1 (202 aa).

Residues C90, H93, and C163 each coordinate Zn(2+).

The protein belongs to the GTP cyclohydrolase I family. As to quaternary structure, toroid-shaped homodecamer, composed of two pentamers of five dimers.

The enzyme catalyses GTP + H2O = 7,8-dihydroneopterin 3'-triphosphate + formate + H(+). It participates in cofactor biosynthesis; 7,8-dihydroneopterin triphosphate biosynthesis; 7,8-dihydroneopterin triphosphate from GTP: step 1/1. The sequence is that of GTP cyclohydrolase 1 from Mycolicibacterium vanbaalenii (strain DSM 7251 / JCM 13017 / BCRC 16820 / KCTC 9966 / NRRL B-24157 / PYR-1) (Mycobacterium vanbaalenii).